The chain runs to 430 residues: Putative membrane fusion protein SilB (430 aa).

The first 28 residues, 1 to 28, serve as a signal peptide directing secretion; it reads MASLKIKYAAIIISSLIAGGLISVTAWQ. A disordered region spans residues 407 to 430; sequence RHPEKTENSMPAMSEQPVNMHSGH. A compositionally biased stretch (polar residues) spans 414-430; that stretch reads NSMPAMSEQPVNMHSGH.

It belongs to the membrane fusion protein (MFP) (TC 8.A.1) family.

Functionally, component of the sil cation efflux system that confers resistance to silver. May be part of a three-component cation/proton antiporter. The sequence is that of Putative membrane fusion protein SilB (silB) from Salmonella typhimurium.